Consider the following 230-residue polypeptide: Potassium/proton antiporter CemA (230 aa).

Transmembrane regions (helical) follow at residues 7 to 27 (LPSF…SFSF), 106 to 126 (IILH…SFFL), 145 to 165 (LNDS…VGFH), and 181 to 201 (LGWV…PVIL).

It belongs to the CemA family.

Its subcellular location is the plastid. The protein localises to the chloroplast inner membrane. It catalyses the reaction K(+)(in) + H(+)(out) = K(+)(out) + H(+)(in). Contributes to K(+)/H(+) antiport activity by supporting proton efflux to control proton extrusion and homeostasis in chloroplasts in a light-dependent manner to modulate photosynthesis. Prevents excessive induction of non-photochemical quenching (NPQ) under continuous-light conditions. Indirectly promotes efficient inorganic carbon uptake into chloroplasts. This is Potassium/proton antiporter CemA from Oryza nivara (Indian wild rice).